The primary structure comprises 1124 residues: EGF and laminin G domain-containing protein (1124 aa).

Over 1–1055 (RTFVKKYSAS…KLQAEDDDKT (1055 aa)) the chain is Extracellular. Laminin G-like domains are found at residues 8 to 203 (SASR…NQKC) and 210 to 369 (PFTF…WSGC). Cystine bridges form between C167–C203, C342–C369, C375–C386, C380–C395, C397–C412, C761–C788, C792–C803, C797–C812, and C814–C824. The EGF-like 1 domain occupies 371–413 (ITDFCIFSPCLHGGECTQTGKTFSCGCSGTGYDKGPNSLSVCQ). Residues 621–788 (NTATFVNEDG…GEAVFVKSGC (168 aa)) form the Laminin G-like 3 domain. In terms of domain architecture, EGF-like 2 spans 789–825 (GAACENNSCKNHAKCLDNYNVYFCDCSKTPYYGYFCH). Residues 1011 to 1047 (RATCGPEPKVPEIPTPRPVGQRADVSTPQGITTNPKL) are disordered. Over residues 1034–1046 (DVSTPQGITTNPK) the composition is skewed to polar residues. Residues 1056–1076 (AIIVVVVLILVLLLVVLILVI) traverse the membrane as a helical segment. At 1077-1124 (YWYWARHKGEYHTHEDDEELKATDPYIEPAAPRKLKGEEPEKKKEWYI) the chain is on the cytoplasmic side. The interval 1090-1124 (HEDDEELKATDPYIEPAAPRKLKGEEPEKKKEWYI) is disordered. The segment covering 1111–1124 (LKGEEPEKKKEWYI) has biased composition (basic and acidic residues).

As to expression, component of the acid-insoluble organic matrix of the aragonitic skeleton (at protein level).

The protein localises to the membrane. This Acropora millepora (Staghorn coral) protein is EGF and laminin G domain-containing protein.